A 521-amino-acid polypeptide reads, in one-letter code: Importin subunit alpha-4 (521 aa).

The interval 1–29 (MAENPGLENHRIKSFKNKGRDVETMRRHR) is disordered. An N-acetylalanine modification is found at alanine 2. Residues 2-58 (AENPGLENHRIKSFKNKGRDVETMRRHRNEVTVELRKNKRDEHLLKKRNVPQEESLE) form the IBB domain. The segment covering 18–29 (KGRDVETMRRHR) has biased composition (basic and acidic residues). The short motif at 43–52 (EHLLKKRNVP) is the Nuclear localization signal element. Phosphoserine is present on residues serine 56 and serine 60. One copy of the ARM 1; truncated repeat lies at 66-106 (FKAQNVTLEAILQNATSDNPVVQLSAVQAARKLLSSDRNPP). 8 ARM repeats span residues 107–149 (IDDL…TSAQ), 150–194 (TQAV…CRDY), 195–233 (VISLGVVKPLLSFINPSIPITFLRNVTWVIVNLCRNKDP), 234–278 (PPPM…EQIQ), 279–318 (MVIDSGVVPFLVPLLSHQEVKVQTAALRAVGNIVTGTDEQ), 319–360 (TQVV…NQQQ), 361–400 (VQAVIDAGLIPMIIHQLAKGDFGTQKEAAWAISNLTISGR), and 401–443 (KDQV…IMAG). The interval 137–229 (WALTNIASGT…VTWVIVNLCR (93 aa)) is NLS binding site (major). Positions 306-394 (RAVGNIVTGT…QKEAAWAISN (89 aa)) are NLS binding site (minor). The ARM 10; atypical repeat unit spans residues 447–485 (STIAEIIEECGGLEKIEVLQQHENEDIYKLAFEIIDQYF). Residue tyrosine 484 is modified to Phosphotyrosine.

This sequence belongs to the importin alpha family. As to quaternary structure, forms a complex with importin subunit beta-1. Interacts with DDX21. Interacts with NCBP1, NCBP2/CBP20 and NCBP3. Interacts with RCC1. Interacts with ZC3H11A. As to expression, detected more or less in all tissues examined (Ehrlich ascites tumor cells, testis, kidney, spleen, liver, heart, lung, thymus, skeletal muscle, cerebellum and brain (without cerebellum)).

Its subcellular location is the cytoplasm. The protein localises to the nucleus. Functionally, functions in nuclear protein import as an adapter protein for nuclear receptor KPNB1. Binds specifically and directly to substrates containing either a simple or bipartite NLS motif. Docking of the importin/substrate complex to the nuclear pore complex (NPC) is mediated by KPNB1 through binding to nucleoporin FxFG repeats and the complex is subsequently translocated through the pore by an energy requiring, Ran-dependent mechanism. At the nucleoplasmic side of the NPC, Ran binds to importin-beta and the three components separate and importin-alpha and -beta are re-exported from the nucleus to the cytoplasm where GTP hydrolysis releases Ran from importin. The directionality of nuclear import is thought to be conferred by an asymmetric distribution of the GTP- and GDP-bound forms of Ran between the cytoplasm and nucleus. In vitro, mediates the nuclear import of human cytomegalovirus UL84 by recognizing a non-classical NLS. This chain is Importin subunit alpha-4 (Kpna3), found in Mus musculus (Mouse).